A 248-amino-acid polypeptide reads, in one-letter code: Aspartate/glutamate leucyltransferase (248 aa).

It belongs to the R-transferase family. Bpt subfamily.

Its subcellular location is the cytoplasm. It catalyses the reaction N-terminal L-glutamyl-[protein] + L-leucyl-tRNA(Leu) = N-terminal L-leucyl-L-glutamyl-[protein] + tRNA(Leu) + H(+). The enzyme catalyses N-terminal L-aspartyl-[protein] + L-leucyl-tRNA(Leu) = N-terminal L-leucyl-L-aspartyl-[protein] + tRNA(Leu) + H(+). Functionally, functions in the N-end rule pathway of protein degradation where it conjugates Leu from its aminoacyl-tRNA to the N-termini of proteins containing an N-terminal aspartate or glutamate. The polypeptide is Aspartate/glutamate leucyltransferase (Methylorubrum populi (strain ATCC BAA-705 / NCIMB 13946 / BJ001) (Methylobacterium populi)).